We begin with the raw amino-acid sequence, 662 residues long: Calcium-dependent protease (662 aa).

One can recognise a Peptidase S8 domain in the interval Gln196–Val529. Catalysis depends on charge relay system residues Asp233, His270, and Ser466. The P/Homo B domain maps to Ala535–Phe662.

This sequence belongs to the peptidase S8 family.

It localises to the cytoplasm. Functionally, degrades phycobiliproteins in vitro. Has a substrate specificity similar to that of trypsin. The chain is Calcium-dependent protease (prcA) from Nostoc sp. (strain PCC 7120 / SAG 25.82 / UTEX 2576).